A 426-amino-acid polypeptide reads, in one-letter code: 26S proteasome regulatory subunit 7B (426 aa).

209–216 (GPPGTGKT) lines the ATP pocket.

This sequence belongs to the AAA ATPase family.

Its subcellular location is the cytoplasm. The protein resides in the nucleus. The 26S proteasome is involved in the ATP-dependent degradation of ubiquitinated proteins. The regulatory (or ATPase) complex confers ATP dependency and substrate specificity to the 26S complex. This is 26S proteasome regulatory subunit 7B (RPT1B) from Oryza sativa subsp. japonica (Rice).